A 325-amino-acid chain; its full sequence is Intelectin (325 aa).

An N-terminal signal peptide occupies residues 1 to 23 (MKYCVLLIMIHLLLVELPQFPEA). Positions 44 to 266 (IRSSYIGRSC…AAMAICSGVK (223 aa)) constitute a Fibrinogen C-terminal domain. An intrachain disulfide couples cysteine 53 to cysteine 82. Ca(2+) contacts are provided by histidine 98, glutamate 99, asparagine 101, glycine 104, glycine 109, aspartate 110, aspartate 145, glutamate 274, glutamate 286, and aspartate 294. Cystine bridges form between cysteine 106-cysteine 292 and cysteine 262-cysteine 277. A carbohydrate contacts are provided by residues 274 to 275 (EH) and glutamate 286.

In terms of tissue distribution, expressed at high levels in caudal kidney, liver, and swim bladder. Also expressed in gill, spleen, intestine and head kidney. Not detected in heart.

Its function is as follows. May be involved in innate immune surveillance. May specifically recognize carbohydrate chains of pathogens and bacterial components in a calcium-dependent manner. In vitro binds N-acetylglucosamine residues. The sequence is that of Intelectin from Oncorhynchus mykiss (Rainbow trout).